A 506-amino-acid polypeptide reads, in one-letter code: Alpha-L-fucosidase 1 (506 aa).

The signal sequence occupies residues 1–23 (MNSQITLFFFFFSILSLSQISNS). 6 N-linked (GlcNAc...) asparagine glycosylation sites follow: asparagine 22, asparagine 82, asparagine 248, asparagine 320, asparagine 355, and asparagine 487.

It belongs to the glycosyl hydrolase 29 family.

It localises to the secreted. Its subcellular location is the extracellular space. The protein resides in the apoplast. It catalyses the reaction an alpha-L-fucoside + H2O = L-fucose + an alcohol. Its function is as follows. Hydrolyzes both 3- and 4-linked fucoses in Lewis determinants. Not active on neither 2-linked fucose nor on fucose in alpha-1,3-linkage to the innermost GlcNAc. The chain is Alpha-L-fucosidase 1 (FUC1) from Arabidopsis thaliana (Mouse-ear cress).